The following is a 373-amino-acid chain: Protein-glutamate methylesterase/protein-glutamine glutaminase 2 (373 aa).

In terms of domain architecture, Response regulatory spans 4–121 (KVLVVDDSGF…SRNPEKVKQL (118 aa)). Residue Asp-55 is modified to 4-aspartylphosphate. Residues 136-181 (FSSYSAPAPQPASAPAPAPSSFASSRSPAPAPAPARAAAPAASANS) are disordered. Over residues 143 to 153 (APQPASAPAPA) the composition is skewed to pro residues. Residues 154–181 (PSSFASSRSPAPAPAPARAAAPAASANS) are compositionally biased toward low complexity. In terms of domain architecture, CheB-type methylesterase spans 182–370 (PAPKRKAYKL…LDDIGRHLVE (189 aa)). Active-site residues include Ser-197, His-224, and Asp-317.

Belongs to the CheB family. Phosphorylated by CheA. Phosphorylation of the N-terminal regulatory domain activates the methylesterase activity.

It localises to the cytoplasm. The catalysed reaction is [protein]-L-glutamate 5-O-methyl ester + H2O = L-glutamyl-[protein] + methanol + H(+). It carries out the reaction L-glutaminyl-[protein] + H2O = L-glutamyl-[protein] + NH4(+). Its function is as follows. Involved in chemotaxis. Part of a chemotaxis signal transduction system that modulates chemotaxis in response to various stimuli. Catalyzes the demethylation of specific methylglutamate residues introduced into the chemoreceptors (methyl-accepting chemotaxis proteins or MCP) by CheR. Also mediates the irreversible deamidation of specific glutamine residues to glutamic acid. The chain is Protein-glutamate methylesterase/protein-glutamine glutaminase 2 from Pseudomonas fluorescens (strain ATCC BAA-477 / NRRL B-23932 / Pf-5).